Reading from the N-terminus, the 611-residue chain is Glutamine--fructose-6-phosphate aminotransferase [isomerizing] (611 aa).

The active-site Nucleophile; for GATase activity is Cys2. Residues 2 to 219 (CGIVGAVAER…EGDIAEIRRD (218 aa)) enclose the Glutamine amidotransferase type-2 domain. SIS domains lie at 287 to 427 (AAEL…VKGS) and 460 to 601 (VAEL…VDQP). The active-site For Fru-6P isomerization activity is the Lys606.

Homodimer.

The protein resides in the cytoplasm. It carries out the reaction D-fructose 6-phosphate + L-glutamine = D-glucosamine 6-phosphate + L-glutamate. Catalyzes the first step in hexosamine metabolism, converting fructose-6P into glucosamine-6P using glutamine as a nitrogen source. The sequence is that of Glutamine--fructose-6-phosphate aminotransferase [isomerizing] from Pseudomonas syringae pv. tomato (strain ATCC BAA-871 / DC3000).